A 690-amino-acid chain; its full sequence is MAKKKSEEHSSADANDSDYQEEPNFDDPPNFVDNINDEDLLGDMLAQRPSEADGVESVVVVDNIPKVEPSRLEKLKSVILKVFSHCGEIVNVVYPVDDEGTTKGYAFMEYRHASQAEDAVKKLNNHRLDKNHTFAVNLFTDFQKYENIPEKWEPPTVQPFKIQNDLYNFINDPDAYDQYCVAAETAPNCVQVGFWQNTLPEPNELETRERFTDTFVKWSPLGTYVVTFHKPGVAIWGGSNFQKIQKFPHTGTQFVEFSPCENYLVTYGPTPTGQKIIIWDIRTGSEKRSFVADGMSVLSMFRWSHDDKFVARMGENSIHIYETPSFYLLDLKSIKIPGIRGFSWSPTDNVIAYWVEEQNQIPARVTLMEIPKKREIRNKNLFHVADCKLHWQKSGDYLCVKVDRYSKLKKDKKELDVKFLGMFYNFEIFHMREKEIPVDSVEIRELILAFAWEPIGNKFSIIHGELNSSNVSFYEVNKGVKPSLVKRLEKKSCTHLFWSPRGQFIVMANLTMGTFEFVDTTNDYIISASPDHFRASEVEWDPTGRYVVTGVSSWKVKEDTGFNMYTFQGRIIKRTILKNFVQFLWRPRPPTLLSEEKQKDIKKNLKKYYPAFEQKDRLRLTRASKELLEKRSQLRETFMEYRNKRIAEWKDQKSRRVMLRGHVDTDNLETEEVDEEIVEFLVKEEITLLE.

A compositionally biased stretch (basic and acidic residues) spans 1 to 11; sequence MAKKKSEEHSS. The segment at 1-33 is disordered; sequence MAKKKSEEHSSADANDSDYQEEPNFDDPPNFVD. Over residues 15–25 the composition is skewed to acidic residues; that stretch reads NDSDYQEEPNF. Positions 57–141 constitute an RRM domain; that stretch reads SVVVVDNIPK…HTFAVNLFTD (85 aa). WD repeat units lie at residues 207–246, 293–331, 334–369, 442–484, and 530–575; these read TRER…KIQK, DGMS…LLDL, IKIP…TLME, EIRE…KPSL, and PDHF…IKRT. Positions 614 to 645 form a coiled coil; sequence QKDRLRLTRASKELLEKRSQLRETFMEYRNKR.

The protein belongs to the eIF-3 subunit B family. Component of the eukaryotic translation initiation factor 3 (eIF-3) complex. The eIF-3 complex interacts with pix. Interacts with mxt.

It is found in the cytoplasm. Functionally, RNA-binding component of the eukaryotic translation initiation factor 3 (eIF-3) complex, which is involved in protein synthesis of a specialized repertoire of mRNAs and, together with other initiation factors, stimulates binding of mRNA and methionyl-tRNAi to the 40S ribosome. The eIF-3 complex specifically targets and initiates translation of a subset of mRNAs involved in cell proliferation. This Drosophila willistoni (Fruit fly) protein is Eukaryotic translation initiation factor 3 subunit B.